The sequence spans 375 residues: Trichodiene synthase (375 aa).

The protein belongs to the trichodiene synthase family.

It catalyses the reaction (2E,6E)-farnesyl diphosphate = trichodiene + diphosphate. Its pathway is sesquiterpene biosynthesis; trichothecene biosynthesis. In terms of biological role, TS is a member of the terpene cyclase group of enzymes. It catalyzes the isomerization and cyclization of farnesyl pyro-phosphate to form trichodiene, the first cyclic intermediate in the biosynthetic pathway for trichothecenes. It serves to branch trichothecene biosynthesis from the isoprenoid pathway. This is Trichodiene synthase (TRI5) from Fusarium pseudograminearum (Wheat and barley crown-rot fungus).